The sequence spans 277 residues: MMSKDKPQIPSGEKMLDIPEGLWTKCPGCNRFLYTKELELNQSVCHYCQHHFPLKAPERIACITDPGSFIECEKHLHSVDILGFNGEKSYQERLDYYRNKTALDEAVVCGSCTIGSIPVFLCVMDFGFLGGSMGSVVGEKITRMIEKSLSAKTPLLIISASGGARMYEGMFSLMQMAKTAAALQRLSQAHVPYISLLTNPTMAGVIASFASLGDVILAEPKAMIGFAGSRVIKETTQQELPPGFQTAEFLLEKGLIDKIVHRKELRSTLKQLLYFLT.

A CoA carboxyltransferase N-terminal domain is found at 22–277 (LWTKCPGCNR…TLKQLLYFLT (256 aa)). Zn(2+)-binding residues include cysteine 26, cysteine 29, cysteine 45, and cysteine 48. The C4-type zinc finger occupies 26-48 (CPGCNRFLYTKELELNQSVCHYC).

The protein belongs to the AccD/PCCB family. In terms of assembly, acetyl-CoA carboxylase is a heterohexamer composed of biotin carboxyl carrier protein (AccB), biotin carboxylase (AccC) and two subunits each of ACCase subunit alpha (AccA) and ACCase subunit beta (AccD). The cofactor is Zn(2+).

It is found in the cytoplasm. The catalysed reaction is N(6)-carboxybiotinyl-L-lysyl-[protein] + acetyl-CoA = N(6)-biotinyl-L-lysyl-[protein] + malonyl-CoA. It participates in lipid metabolism; malonyl-CoA biosynthesis; malonyl-CoA from acetyl-CoA: step 1/1. In terms of biological role, component of the acetyl coenzyme A carboxylase (ACC) complex. Biotin carboxylase (BC) catalyzes the carboxylation of biotin on its carrier protein (BCCP) and then the CO(2) group is transferred by the transcarboxylase to acetyl-CoA to form malonyl-CoA. The sequence is that of Acetyl-coenzyme A carboxylase carboxyl transferase subunit beta from Methylacidiphilum infernorum (isolate V4) (Methylokorus infernorum (strain V4)).